The sequence spans 1103 residues: Platelet-derived growth factor receptor beta (1103 aa).

The first 31 residues, 1 to 31 (MQVPGTMPAPVLKGQALWLPLLLMLSPQASG), serve as a signal peptide directing secretion. 5 Ig-like C2-type domains span residues 33–120 (LVIT…YIFV), 129–210 (PVDP…YSLQ), 214–309 (INVS…INVT), 331–403 (HRSR…HEDA), and 416–524 (PVRV…VTVV). Topologically, residues 33–532 (LVITPPGPEL…VVPHSLPFKV (500 aa)) are extracellular. N-linked (GlcNAc...) asparagine glycans are attached at residues N45 and N89. Cystine bridges form between C54–C100 and C149–C190. N-linked (GlcNAc...) asparagine glycosylation is found at N215 and N230. C235 and C291 are joined by a disulfide. N-linked (GlcNAc...) asparagine glycosylation is found at N292, N307, N354, N371, N468, and N479. C436 and C508 are oxidised to a cystine. A helical transmembrane segment spans residues 533–553 (VVISAILALVVLTIISLIILI). Topologically, residues 554–1103 (MLWQKKPRYE…PRAEAEDSFL (550 aa)) are cytoplasmic. Phosphotyrosine; by autocatalysis is present on residues Y562, Y579, and Y581. One can recognise a Protein kinase domain in the interval 600–962 (LVLGRTLGSG…QLVLLLERLL (363 aa)). Residues 606–614 (LGSGAFGQV) and K634 contribute to the ATP site. Residue Y686 is modified to Phosphotyrosine; by ABL1 and ABL2. Phosphotyrosine; by autocatalysis is present on residues Y716, Y740, Y751, Y763, Y771, Y775, and Y778. D826 serves as the catalytic Proton acceptor. Phosphotyrosine; by autocatalysis is present on Y857. A phosphotyrosine; by ABL1 and ABL2 mark is found at Y934 and Y970. Phosphotyrosine; by autocatalysis occurs at positions 1009 and 1021. The disordered stretch occupies residues 1017–1103 (GDNDYIIPLP…PRAEAEDSFL (87 aa)). Residues 1039 to 1059 (SSPSLASSTLNEVNTSSTISC) show a composition bias toward polar residues. Over residues 1065–1075 (PQEEPEPEPEP) the composition is skewed to acidic residues. Residues 1076-1086 (QPEPQVVPEPP) show a composition bias toward pro residues.

The protein belongs to the protein kinase superfamily. Tyr protein kinase family. CSF-1/PDGF receptor subfamily. As to quaternary structure, interacts with homodimeric PDGFB and PDGFD, and with heterodimers formed by PDGFA and PDGFB. May also interact with homodimeric PDGFC. Monomer in the absence of bound ligand. Interaction with homodimeric PDGFB, heterodimers formed by PDGFA and PDGFB or homodimeric PDGFD, leads to receptor dimerization, where both PDGFRA homodimers and heterodimers with PDGFRB are observed. Interacts with SH2B2/APS. Interacts directly (tyrosine phosphorylated) with SHB. Interacts (tyrosine phosphorylated) with PIK3R1 and RASA1. Interacts (tyrosine phosphorylated) with CBL. Interacts (tyrosine phosphorylated) with SRC and SRC family kinases. Interacts (tyrosine phosphorylated) with PIK3C2B, maybe indirectly. Interacts (tyrosine phosphorylated) with SHC1, GRB7, GRB10 and NCK1. Interaction with GRB2 is mediated by SHC1. Interacts (via C-terminus) with NHERF1. N-glycosylated. In terms of processing, ubiquitinated. After autophosphorylation, the receptor is polyubiquitinated, leading to its degradation. Post-translationally, autophosphorylated on tyrosine residues upon ligand binding. Autophosphorylation occurs in trans, i.e. one subunit of the dimeric receptor phosphorylates tyrosine residues on the other subunit. Phosphorylation at Tyr-579, and to a lesser degree, Tyr-581 is important for interaction with SRC. Phosphorylation at Tyr-716 is important for interaction with GRB2. Phosphorylation at Tyr-740 and Tyr-751 is important for interaction with PIK3R1. Phosphorylation at Tyr-751 is important for interaction with NCK1. Phosphorylation at Tyr-771 and Tyr-857 is important for interaction with RASA1/GAP. Phosphorylation at Tyr-857 is important for efficient phosphorylation of PLCG1 and PTPN11, resulting in increased phosphorylation of AKT1, MAPK1/ERK2 and/or MAPK3/ERK1, PDCD6IP/ALIX and STAM, and in increased cell proliferation. Phosphorylation at Tyr-1009 is important for interaction with PTPN11. Phosphorylation at Tyr-1009 and Tyr-1021 is important for interaction with PLCG1. Dephosphorylated by PTPRJ at Tyr-751, Tyr-857, Tyr-1009 and Tyr-1021. Dephosphorylated by PTPN2 at Tyr-579 and Tyr-1021.

The protein localises to the cell membrane. The protein resides in the cytoplasmic vesicle. It is found in the lysosome lumen. It carries out the reaction L-tyrosyl-[protein] + ATP = O-phospho-L-tyrosyl-[protein] + ADP + H(+). Its activity is regulated as follows. Present in an inactive conformation in the absence of bound ligand. Binding of PDGFB and/or PDGFD leads to dimerization and activation by autophosphorylation on tyrosine residues. In terms of biological role, tyrosine-protein kinase that acts as a cell-surface receptor for homodimeric PDGFB and PDGFD and for heterodimers formed by PDGFA and PDGFB, and plays an essential role in the regulation of embryonic development, cell proliferation, survival, differentiation, chemotaxis and migration. Plays an essential role in blood vessel development by promoting proliferation, migration and recruitment of pericytes and smooth muscle cells to endothelial cells. Plays a role in the migration of vascular smooth muscle cells and the formation of neointima at vascular injury sites. Required for normal development of the cardiovascular system. Required for normal recruitment of pericytes (mesangial cells) in the kidney glomerulus, and for normal formation of a branched network of capillaries in kidney glomeruli. Promotes rearrangement of the actin cytoskeleton and the formation of membrane ruffles. Binding of its cognate ligands - homodimeric PDGFB, heterodimers formed by PDGFA and PDGFB or homodimeric PDGFD -leads to the activation of several signaling cascades; the response depends on the nature of the bound ligand and is modulated by the formation of heterodimers between PDGFRA and PDGFRB. Phosphorylates PLCG1, PIK3R1, PTPN11, RASA1/GAP, CBL, SHC1 and NCK1. Activation of PLCG1 leads to the production of the cellular signaling molecules diacylglycerol and inositol 1,4,5-trisphosphate, mobilization of cytosolic Ca(2+) and the activation of protein kinase C. Phosphorylation of PIK3R1, the regulatory subunit of phosphatidylinositol 3-kinase, leads to the activation of the AKT1 signaling pathway. Phosphorylation of SHC1, or of the C-terminus of PTPN11, creates a binding site for GRB2, resulting in the activation of HRAS, RAF1 and down-stream MAP kinases, including MAPK1/ERK2 and/or MAPK3/ERK1. Promotes phosphorylation and activation of SRC family kinases. Promotes phosphorylation of PDCD6IP/ALIX and STAM. Receptor signaling is down-regulated by protein phosphatases that dephosphorylate the receptor and its down-stream effectors, and by rapid internalization of the activated receptor. The polypeptide is Platelet-derived growth factor receptor beta (PDGFRB) (Canis lupus familiaris (Dog)).